Here is a 455-residue protein sequence, read N- to C-terminus: tRNA modification GTPase MnmE (455 aa).

3 residues coordinate (6S)-5-formyl-5,6,7,8-tetrahydrofolate: Arg-22, Glu-85, and Arg-124. One can recognise a TrmE-type G domain in the interval 220–377 (GIYTVIVGRP…VEKAIKEAIL (158 aa)). Residue Asn-230 participates in K(+) binding. GTP is bound by residues 230–235 (NVGKSS), 249–255 (TDIPGTT), and 274–277 (DTAG). A Mg(2+)-binding site is contributed by Ser-234. K(+) is bound by residues Thr-249, Ile-251, and Thr-254. Residue Thr-255 coordinates Mg(2+). Lys-455 is a binding site for (6S)-5-formyl-5,6,7,8-tetrahydrofolate.

It belongs to the TRAFAC class TrmE-Era-EngA-EngB-Septin-like GTPase superfamily. TrmE GTPase family. In terms of assembly, homodimer. Heterotetramer of two MnmE and two MnmG subunits. K(+) serves as cofactor.

It localises to the cytoplasm. In terms of biological role, exhibits a very high intrinsic GTPase hydrolysis rate. Involved in the addition of a carboxymethylaminomethyl (cmnm) group at the wobble position (U34) of certain tRNAs, forming tRNA-cmnm(5)s(2)U34. In Caldicellulosiruptor saccharolyticus (strain ATCC 43494 / DSM 8903 / Tp8T 6331), this protein is tRNA modification GTPase MnmE.